The sequence spans 168 residues: CASP-like protein 1U1 (168 aa).

The Cytoplasmic segment spans residues 1 to 6 (MDGAAR). Residues 7 to 27 (AVSLFFRIAVVGLSVAAAVVM) traverse the membrane as a helical segment. Residues 28 to 49 (ATASQAFPFNYGGAVSYTKYPA) are Extracellular-facing. Residues 50-70 (FVYFVVAAVVSAVCSAAALYL) traverse the membrane as a helical segment. Topologically, residues 71-80 (SVVREAAAGW) are cytoplasmic. A helical membrane pass occupies residues 81 to 101 (AVALLDVVTMGLLFSAAGAVF). Over 102 to 138 (AVRRMAPLYLGVAGADTVAGRWVNGEFCHAAGAFCWR) the chain is Extracellular. The helical transmembrane segment at 139–159 (VTTSAIICAFAAAAVSVAVLT) threads the bilayer. Residues 160-168 (KGARHRGKH) are Cytoplasmic-facing.

This sequence belongs to the Casparian strip membrane proteins (CASP) family. In terms of assembly, homodimer and heterodimers.

The protein localises to the cell membrane. This chain is CASP-like protein 1U1, found in Oryza sativa subsp. japonica (Rice).